The chain runs to 402 residues: LIM homeobox transcription factor 1-beta (402 aa).

LIM zinc-binding domains follow at residues 56-106 (CEGC…CKQD) and 115-168 (CSGC…CKGD). 2 disordered regions span residues 176 to 229 (LSSV…LTTQ) and 326 to 346 (PYGS…PGDH). A DNA-binding region (homeobox) is located at residues 219–278 (PKRPRTILTTQQRRAFKASFEVSSKPCRKVRETLAAETGLSVRVVQVWFQNQRAKMKKLA). Positions 326–338 (PYGSSDPFQQGLT) are enriched in polar residues.

Interacts with DHX9. In terms of tissue distribution, expressed in most tissues. Highest levels in testis, thyroid, duodenum, skeletal muscle, and pancreatic islets.

It localises to the nucleus. Its function is as follows. Transcription factor involved in the regulation of podocyte-expressed genes. Essential for the specification of dorsal limb fate at both the zeugopodal and autopodal levels. This chain is LIM homeobox transcription factor 1-beta (LMX1B), found in Homo sapiens (Human).